Reading from the N-terminus, the 397-residue chain is Chorismate synthase (397 aa).

NADP(+) is bound by residues Arg40 and Arg46. FMN is bound by residues 129–131 (RAS), 257–258 (QA), Gly302, 317–321 (KPIAT), and Arg343.

It belongs to the chorismate synthase family. In terms of assembly, homotetramer. Requires FMNH2 as cofactor.

The enzyme catalyses 5-O-(1-carboxyvinyl)-3-phosphoshikimate = chorismate + phosphate. The protein operates within metabolic intermediate biosynthesis; chorismate biosynthesis; chorismate from D-erythrose 4-phosphate and phosphoenolpyruvate: step 7/7. Its function is as follows. Catalyzes the anti-1,4-elimination of the C-3 phosphate and the C-6 proR hydrogen from 5-enolpyruvylshikimate-3-phosphate (EPSP) to yield chorismate, which is the branch point compound that serves as the starting substrate for the three terminal pathways of aromatic amino acid biosynthesis. This reaction introduces a second double bond into the aromatic ring system. The chain is Chorismate synthase from Chlorobium phaeobacteroides (strain BS1).